Here is a 423-residue protein sequence, read N- to C-terminus: Progestin and adipoQ receptor-like protein 1 (423 aa).

The Cytoplasmic portion of the chain corresponds to 1 to 201; sequence MDPDEVNQAL…KSIWSLHTET (201 aa). The interval 54 to 140 is disordered; the sequence is VVSPTNSDDE…DEDELEVDVK (87 aa). Residues 60–69 are compositionally biased toward acidic residues; it reads SDDEEGEFCS. Basic residues predominate over residues 104-114; it reads TVLRYRRKKGG. Residues 202-222 form a helical membrane-spanning segment; sequence GNIWTHLIGCVAFFLLACWFL. The Extracellular segment spans residues 223–234; that stretch reads TRPDNHIQFQEK. The helical transmembrane segment at 235-252 threads the bilayer; sequence VVFSFFFAGAVSVSDSRS. Topologically, residues 253–288 are cytoplasmic; it reads PSTPSRVIRSTSSRYSANSTIWESRCSLSARLFQPK. Residues 289–309 form a helical membrane-spanning segment; it reads ITYIAMVCVLGIGAIVVSLWD. Residues 310 to 320 are Extracellular-facing; sequence KFSESKYRPVR. Residues 321–341 traverse the membrane as a helical segment; sequence AAVFVGMGCSGVIPTIHYIIT. At 342-351 the chain is on the cytoplasmic side; the sequence is DGVHSLFADN. The helical transmembrane segment at 352-372 threads the bilayer; sequence SFHWLLLMAFLYLLGAALYAT. Residues 373–392 lie on the Extracellular side of the membrane; the sequence is RTPERFFPGKCDIWFQSHQL. The chain crosses the membrane as a helical span at residues 393–413; that stretch reads FHTCVVIAAFVHYYGISEMAF. Residues 414 to 423 are Cytoplasmic-facing; it reads ARLNEQCPVR.

This sequence belongs to the ADIPOR family.

It localises to the membrane. Functionally, probable receptor, which may be involved in metabolic pathways that regulate lipid metabolism such as fatty acid oxidation. This is Progestin and adipoQ receptor-like protein 1 from Caenorhabditis briggsae.